A 161-amino-acid polypeptide reads, in one-letter code: S-ribosylhomocysteine lyase (161 aa).

Residues His-57, His-61, and Cys-124 each contribute to the Fe cation site.

This sequence belongs to the LuxS family. Homodimer. Fe cation serves as cofactor.

It carries out the reaction S-(5-deoxy-D-ribos-5-yl)-L-homocysteine = (S)-4,5-dihydroxypentane-2,3-dione + L-homocysteine. Involved in the synthesis of autoinducer 2 (AI-2) which is secreted by bacteria and is used to communicate both the cell density and the metabolic potential of the environment. The regulation of gene expression in response to changes in cell density is called quorum sensing. Catalyzes the transformation of S-ribosylhomocysteine (RHC) to homocysteine (HC) and 4,5-dihydroxy-2,3-pentadione (DPD). This chain is S-ribosylhomocysteine lyase, found in Macrococcus caseolyticus (strain JCSC5402) (Macrococcoides caseolyticum).